The primary structure comprises 80 residues: Exodeoxyribonuclease 7 small subunit (80 aa).

The protein belongs to the XseB family. Heterooligomer composed of large and small subunits.

The protein localises to the cytoplasm. The catalysed reaction is Exonucleolytic cleavage in either 5'- to 3'- or 3'- to 5'-direction to yield nucleoside 5'-phosphates.. In terms of biological role, bidirectionally degrades single-stranded DNA into large acid-insoluble oligonucleotides, which are then degraded further into small acid-soluble oligonucleotides. This Salmonella paratyphi B (strain ATCC BAA-1250 / SPB7) protein is Exodeoxyribonuclease 7 small subunit.